The primary structure comprises 193 residues: Potassium-transporting ATPase KdpC subunit (193 aa).

Residues 14–34 traverse the membrane as a helical segment; it reads ITFTFLVLCGLVYPLIVTGIA.

Belongs to the KdpC family. In terms of assembly, the system is composed of three essential subunits: KdpA, KdpB and KdpC.

It is found in the cell membrane. In terms of biological role, part of the high-affinity ATP-driven potassium transport (or Kdp) system, which catalyzes the hydrolysis of ATP coupled with the electrogenic transport of potassium into the cytoplasm. This subunit acts as a catalytic chaperone that increases the ATP-binding affinity of the ATP-hydrolyzing subunit KdpB by the formation of a transient KdpB/KdpC/ATP ternary complex. This chain is Potassium-transporting ATPase KdpC subunit, found in Bacillus thuringiensis subsp. konkukian (strain 97-27).